A 301-amino-acid polypeptide reads, in one-letter code: m7GpppX diphosphatase (301 aa).

Substrate-binding positions include glutamate 154, lysine 176, and histidine 237 to histidine 248. Positions histidine 244–histidine 248 match the Histidine triad motif motif. The active-site Nucleophile is histidine 246.

This sequence belongs to the HIT family.

It localises to the nucleus. The catalysed reaction is a 5'-end (N(7)-methyl 5'-triphosphoguanosine)-ribonucleoside in mRNA + H2O = N(7)-methyl-GMP + a 5'-end diphospho-ribonucleoside in mRNA + 2 H(+). The enzyme catalyses a 5'-end (N(2),N(2),N(7)-trimethyl 5'-triphosphoguanosine)-ribonucleoside in mRNA + H2O = (N(2),N(2),N(7))-trimethyl-GMP + a 5'-end diphospho-ribonucleoside in mRNA + 2 H(+). With respect to regulation, the hydrolytic product 7-methylguanosine diphosphate (m7GDP) efficiently inhibits the decapping scavenger activity and acts as a competitive inhibitor in vitro. In terms of biological role, decapping scavenger enzyme that catalyzes the cleavage of a residual cap structure following the degradation of mRNAs of the 3'-&gt;5' exosome-mediated mRNA decay pathway. Hydrolyzes cap analog structures like 7-methylguanosine nucleoside triphosphate (m7GpppG) and tri-methyl guanosine nucleoside triphosphate (m3(2,2,7)GpppG) with up to 2 nucleotide substrates (small capped oligoribonucleotides) and specifically releases 5'-phosphorylated RNA fragments and 7-methylguanosine monophosphate (m7GMP). Does not hydrolyze unmethylated cap analog (GpppG) and shows no decapping activity on intact m7GpppG-capped mRNA molecules. Does not hydrolyze 7-methylguanosine diphosphate (m7GDP) and tri-methylguanosine diphosphate (m3(2,2,7)GDP) to m(7)GMP and m3(2,2,7)GMP, respectively. May also play a role in the 5'-&gt;3 mRNA decay pathway; m7GDP, the downstream product released by the 5'-&gt;3' mRNA mediated decapping activity, may be also converted by dcs-1 to m7GMP. Binds to m7GpppG and strongly to m7GDP. The polypeptide is m7GpppX diphosphatase (Ascaris suum (Pig roundworm)).